A 670-amino-acid polypeptide reads, in one-letter code: tRNA 5-methylaminomethyl-2-thiouridine biosynthesis bifunctional protein MnmC (670 aa).

The segment at 1–245 (MKPIAIQPAS…KREMLTGALS (245 aa)) is tRNA (mnm(5)s(2)U34)-methyltransferase. The FAD-dependent cmnm(5)s(2)U34 oxidoreductase stretch occupies residues 271–670 (VGGGIASALL…RKLLKGRAAS (400 aa)).

It in the N-terminal section; belongs to the methyltransferase superfamily. tRNA (mnm(5)s(2)U34)-methyltransferase family. In the C-terminal section; belongs to the DAO family. It depends on FAD as a cofactor.

It is found in the cytoplasm. It carries out the reaction 5-aminomethyl-2-thiouridine(34) in tRNA + S-adenosyl-L-methionine = 5-methylaminomethyl-2-thiouridine(34) in tRNA + S-adenosyl-L-homocysteine + H(+). Catalyzes the last two steps in the biosynthesis of 5-methylaminomethyl-2-thiouridine (mnm(5)s(2)U) at the wobble position (U34) in tRNA. Catalyzes the FAD-dependent demodification of cmnm(5)s(2)U34 to nm(5)s(2)U34, followed by the transfer of a methyl group from S-adenosyl-L-methionine to nm(5)s(2)U34, to form mnm(5)s(2)U34. The polypeptide is tRNA 5-methylaminomethyl-2-thiouridine biosynthesis bifunctional protein MnmC (Cronobacter sakazakii (strain ATCC BAA-894) (Enterobacter sakazakii)).